The following is a 366-amino-acid chain: Methylthioribose-1-phosphate isomerase (366 aa).

Residues 53–55 (RGA), Arg90, and Gln203 each bind substrate. The active-site Proton donor is the Asp244. A substrate-binding site is contributed by 254–255 (NK).

Belongs to the eIF-2B alpha/beta/delta subunits family. MtnA subfamily.

The catalysed reaction is 5-(methylsulfanyl)-alpha-D-ribose 1-phosphate = 5-(methylsulfanyl)-D-ribulose 1-phosphate. It participates in amino-acid biosynthesis; L-methionine biosynthesis via salvage pathway; L-methionine from S-methyl-5-thio-alpha-D-ribose 1-phosphate: step 1/6. Its function is as follows. Catalyzes the interconversion of methylthioribose-1-phosphate (MTR-1-P) into methylthioribulose-1-phosphate (MTRu-1-P). The protein is Methylthioribose-1-phosphate isomerase of Methylocella silvestris (strain DSM 15510 / CIP 108128 / LMG 27833 / NCIMB 13906 / BL2).